Here is a 270-residue protein sequence, read N- to C-terminus: Centromere protein Q (270 aa).

The tract at residues 1–59 (MSGKANTSKKKSQRVKRNVKQRADKEDEELDSPENKVGNRAKRNRSHAGHLSSKEQTKC) is disordered. 2 stretches are compositionally biased toward basic residues: residues 7-20 (TSKKKSQRVKRNVK) and 39-48 (NRAKRNRSHA). The residue at position 52 (serine 52) is a Phosphoserine. Residues 143–205 (LKVEREQERA…EEEMKEVFHI (63 aa)) are a coiled coil.

It belongs to the CENP-Q/OKP1 family. As to quaternary structure, component of the CENPA-CAD complex, composed of CENPI, CENPK, CENPL, CENPO, CENPP, CENPQ, CENPR and CENPS. The CENPA-CAD complex interacts with the CENPA-NAC complex, at least composed of CENPA, CENPC, CENPH, CENPM, CENPN, CENPT and CENPU. Phosphorylation at Ser-52 is essential for CENPE recruitment to kinetochores and orderly chromosome congression.

The protein resides in the nucleus. It is found in the chromosome. The protein localises to the centromere. In terms of biological role, component of the CENPA-CAD (nucleosome distal) complex, a complex recruited to centromeres which is involved in assembly of kinetochore proteins, mitotic progression and chromosome segregation. May be involved in incorporation of newly synthesized CENPA into centromeres via its interaction with the CENPA-NAC complex. Plays an important role in chromosome congression and in the recruitment of CENP-O complex (which comprises CENPO, CENPP, CENPQ and CENPU), CENPE and PLK1 to the kinetochores. The polypeptide is Centromere protein Q (Cenpq) (Rattus norvegicus (Rat)).